Consider the following 235-residue polypeptide: Caveolin-1 (235 aa).

Residues 1-161 (MSTEQDIKTE…LVSLLALPFT (161 aa)) lie on the Cytoplasmic side of the membrane. The segment at 29 to 72 (GEAVVAPEEPKPKKNWFTFGKKKAAPTDETNIEEGGAPGDEPVK) is disordered. The segment at residues 162–182 (IIFAIFFGLLASINVFIIVPL) is an intramembrane region (helical). Residues 183-235 (GKLLSIPGTLLAKLWNWLIHAIFDPIASAVGLIFSNFNIRKYGINQETTAPCV) lie on the Cytoplasmic side of the membrane. The S-palmitoyl cysteine moiety is linked to residue Cys-234.

Belongs to the caveolin family. As to quaternary structure, homooligomer containing 14-16 monomers per oligomer.

It is found in the golgi apparatus membrane. The protein resides in the cell membrane. It localises to the membrane. The protein localises to the caveola. May act as a scaffolding protein within caveolar membranes. Interacts directly with G-protein alpha subunits and can functionally regulate their activity. The chain is Caveolin-1 (cav-1) from Caenorhabditis elegans.